The sequence spans 282 residues: Phosphatidylglycerol--prolipoprotein diacylglyceryl transferase (282 aa).

The next 3 membrane-spanning stretches (helical) occupy residues 19 to 39, 58 to 78, and 104 to 124; these read IGPFAIRWYALAYICGIVFGW, ISLVQVDDFILWVTLGIILGG, and GGMSFHGGFLGCVVAVMWFAY. Arginine 149 serves as a coordination point for a 1,2-diacyl-sn-glycero-3-phospho-(1'-sn-glycerol). 3 helical membrane passes run 190–210, 214–234, and 250–270; these read AGMEGILLFTVLAIMIRLGAL, GMILGAFILIYGLTRIAGEHF, and MGMLLSIPMLIVGLILIVLAI.

The protein belongs to the Lgt family.

The protein resides in the cell inner membrane. The catalysed reaction is L-cysteinyl-[prolipoprotein] + a 1,2-diacyl-sn-glycero-3-phospho-(1'-sn-glycerol) = an S-1,2-diacyl-sn-glyceryl-L-cysteinyl-[prolipoprotein] + sn-glycerol 1-phosphate + H(+). The protein operates within protein modification; lipoprotein biosynthesis (diacylglyceryl transfer). Catalyzes the transfer of the diacylglyceryl group from phosphatidylglycerol to the sulfhydryl group of the N-terminal cysteine of a prolipoprotein, the first step in the formation of mature lipoproteins. The sequence is that of Phosphatidylglycerol--prolipoprotein diacylglyceryl transferase from Bradyrhizobium diazoefficiens (strain JCM 10833 / BCRC 13528 / IAM 13628 / NBRC 14792 / USDA 110).